The sequence spans 207 residues: Probable nicotinate-nucleotide adenylyltransferase (207 aa).

This sequence belongs to the NadD family.

It catalyses the reaction nicotinate beta-D-ribonucleotide + ATP + H(+) = deamido-NAD(+) + diphosphate. It functions in the pathway cofactor biosynthesis; NAD(+) biosynthesis; deamido-NAD(+) from nicotinate D-ribonucleotide: step 1/1. In terms of biological role, catalyzes the reversible adenylation of nicotinate mononucleotide (NaMN) to nicotinic acid adenine dinucleotide (NaAD). The polypeptide is Probable nicotinate-nucleotide adenylyltransferase (Desulfitobacterium hafniense (strain DSM 10664 / DCB-2)).